The primary structure comprises 191 residues: MEGFFWKTLLVVGALTISGTSSFPHKPLTYEEAVDLAVSVYNSKSGEDSLYRLLEAVPALKWDALSESNQELNFSVKETVCQMAEERSLEECDFQEAGAVMGCTGYYFFGESPPVLVLTCKSVGNEEEQKQEEGNEEEKEVEKEEKEEDQKDQPKRVKRFKKFFKKLKNSVKKRAKKFFKKPKVIGVTFPF.

The N-terminal stretch at 1 to 22 (MEGFFWKTLLVVGALTISGTSS) is a signal peptide. A propeptide spanning residues 23–161 (FPHKPLTYEE…DQPKRVKRFK (139 aa)) is cleaved from the precursor. Intrachain disulfides connect Cys-81–Cys-92 and Cys-103–Cys-120. Positions 126-154 (EEEQKQEEGNEEEKEVEKEEKEEDQKDQP) are disordered. A compositionally biased stretch (basic and acidic residues) spans 140 to 154 (EVEKEEKEEDQKDQP).

Belongs to the cathelicidin family. In terms of tissue distribution, expressed by the venom gland.

The protein localises to the secreted. It is found in the target cell membrane. In terms of biological role, potent antimicrobial peptide against most of Gram-negative bacteria, some Gram-positive bacteria (Bacillus) and some fungi. Adopts an amphipathic alpha helical conformation, that may allow to partition into the target membrane. No hemolytic and cytotoxic activities have been observed on mammalian cells. The protein is Cathelicidin-related antimicrobial peptide Na_CRAMP of Naja atra (Chinese cobra).